A 226-amino-acid chain; its full sequence is Cytidylate kinase (226 aa).

10–18 (GPASSGKST) is a binding site for ATP.

Belongs to the cytidylate kinase family. Type 1 subfamily.

It is found in the cytoplasm. It catalyses the reaction CMP + ATP = CDP + ADP. It carries out the reaction dCMP + ATP = dCDP + ADP. This chain is Cytidylate kinase, found in Streptococcus thermophilus (strain ATCC BAA-491 / LMD-9).